A 75-amino-acid polypeptide reads, in one-letter code: MASSALAKPQMRGLLARRLRIHIVGAFVVSLGVAAFYKYAVAEPRKKAYADFYRNYDSVKYFEEMRKAGVFQSVK.

The Mitochondrial matrix segment spans residues M1–G13. Residues L14–R54 traverse the membrane as a helical segment. Residues N55–K75 are Mitochondrial intermembrane-facing.

Belongs to the cytochrome c oxidase subunit 6c family. Component of the cytochrome c oxidase (complex IV, CIV), a multisubunit enzyme composed of 14 subunits. The complex is composed of a catalytic core of 3 subunits MT-CO1, MT-CO2 and MT-CO3, encoded in the mitochondrial DNA, and 11 supernumerary subunits COX4I, COX5A, COX5B, COX6A, COX6B, COX6C, COX7A, COX7B, COX7C, COX8 and NDUFA4, which are encoded in the nuclear genome. The complex exists as a monomer or a dimer and forms supercomplexes (SCs) in the inner mitochondrial membrane with NADH-ubiquinone oxidoreductase (complex I, CI) and ubiquinol-cytochrome c oxidoreductase (cytochrome b-c1 complex, complex III, CIII), resulting in different assemblies (supercomplex SCI(1)III(2)IV(1) and megacomplex MCI(2)III(2)IV(2)).

Its subcellular location is the mitochondrion inner membrane. It functions in the pathway energy metabolism; oxidative phosphorylation. Component of the cytochrome c oxidase, the last enzyme in the mitochondrial electron transport chain which drives oxidative phosphorylation. The respiratory chain contains 3 multisubunit complexes succinate dehydrogenase (complex II, CII), ubiquinol-cytochrome c oxidoreductase (cytochrome b-c1 complex, complex III, CIII) and cytochrome c oxidase (complex IV, CIV), that cooperate to transfer electrons derived from NADH and succinate to molecular oxygen, creating an electrochemical gradient over the inner membrane that drives transmembrane transport and the ATP synthase. Cytochrome c oxidase is the component of the respiratory chain that catalyzes the reduction of oxygen to water. Electrons originating from reduced cytochrome c in the intermembrane space (IMS) are transferred via the dinuclear copper A center (CU(A)) of subunit 2 and heme A of subunit 1 to the active site in subunit 1, a binuclear center (BNC) formed by heme A3 and copper B (CU(B)). The BNC reduces molecular oxygen to 2 water molecules using 4 electrons from cytochrome c in the IMS and 4 protons from the mitochondrial matrix. In Nycticebus coucang (Slow loris), this protein is Cytochrome c oxidase subunit 6C (COX6C).